The sequence spans 79 residues: uncharacterized protein (79 aa).

The protein belongs to the asfivirus D79L family.

This is an uncharacterized protein from African swine fever virus (strain Badajoz 1971 Vero-adapted) (Ba71V).